Reading from the N-terminus, the 829-residue chain is Trimethylamine-N-oxide reductase (829 aa).

The segment at residues 1-31 is a signal peptide (tat-type signal); it reads MNRRDFLKGIASSSFVVLGGSSVLTPLNALA. Serine 180 serves as a coordination point for Mo-bis(molybdopterin guanine dinucleotide).

This sequence belongs to the prokaryotic molybdopterin-containing oxidoreductase family. Requires Mo-bis(molybdopterin guanine dinucleotide) as cofactor. Predicted to be exported by the Tat system. The position of the signal peptide cleavage has been experimentally proven.

It is found in the periplasm. It catalyses the reaction trimethylamine + 2 Fe(III)-[cytochrome c] + H2O = trimethylamine N-oxide + 2 Fe(II)-[cytochrome c] + 3 H(+). In terms of biological role, reduces trimethylamine-N-oxide (TMAO) into trimethylamine; an anaerobic reaction coupled to energy-yielding reactions. In Shewanella massilia, this protein is Trimethylamine-N-oxide reductase (torA).